The chain runs to 213 residues: Vacuolar protein sorting-associated protein 32 homolog 1 (213 aa).

Coiled coils occupy residues 11-42 and 118-176; these read KQETSTLQTLDKLNETLEMLEKKENVLLKKAT and TNID…QLLQ. The tract at residues 180 to 213 is disordered; sequence IHVPQGNKPARAPAQKQPTAEEDELAALQAEMAL.

The protein belongs to the SNF7 family. Component of the endosomal sorting required for transport complex III (ESCRT-III), composed at least of VPS2, VPS20, VPS24 and VPS32. Interacts with SKD1. Interacts with BRO1/ALIX.

It is found in the endosome. In terms of biological role, component of the ESCRT-III complex, which is required for multivesicular bodies (MVBs) formation and sorting of endosomal cargo proteins into MVBs. The ESCRT-III complex is probably involved in the concentration of MVB cargo. The chain is Vacuolar protein sorting-associated protein 32 homolog 1 (VPS32.1) from Arabidopsis thaliana (Mouse-ear cress).